A 129-amino-acid chain; its full sequence is SMNGVVDERMSFKAGQNLTVKGVPSIDSTNFAINVGNSAEDLALHINPRFDAHGDQQAVVVNSFQGGNWGTEQREGGFPFKQGEDFKIQITFNSEEFRIILPDGSEIHFPNNRYMHFEGEARIYSIEIK.

Ser-1 is subject to N-acetylserine. The 126-residue stretch at 4–129 (GVVDERMSFK…EARIYSIEIK (126 aa)) folds into the Galectin domain. 69–75 (WGTEQRE) contributes to the a beta-D-galactoside binding site.

Functionally, this protein binds beta-galactoside. Its physiological function is not yet known. The sequence is that of Beta-galactoside-binding lectin from Electrophorus electricus (Electric eel).